The chain runs to 168 residues: Disulfide bond formation protein B (168 aa).

Residues 1–6 (MTSRWI) are Cytoplasmic-facing. The helical transmembrane segment at 7–23 (FGLVFLVCAGLLAVAFY) threads the bilayer. Topologically, residues 24 to 41 (MEHVMGLEPCPLCWLQRF) are periplasmic. An intrachain disulfide couples C33 to C36. Residues 42–58 (GFMGAGLVSLLAFLHGP) form a helical membrane-spanning segment. At 59 to 65 (RGFGNRV) the chain is on the cytoplasmic side. A helical membrane pass occupies residues 66–82 (YGLLLIVAAGAGLAVAG). Topologically, residues 83 to 139 (RQLWLQSLPADQVPACGPSVDYMLEVLPWFEVLQTALKGTGDCAEVVWRFLGLSIPG) are periplasmic. C98 and C125 are oxidised to a cystine. Residues 140–158 (WTAVFFSLLIVLGLFVMLR) form a helical membrane-spanning segment. At 159–168 (RYSPRDWLQS) the chain is on the cytoplasmic side.

Belongs to the DsbB family.

It localises to the cell inner membrane. Functionally, required for disulfide bond formation in some periplasmic proteins. Acts by oxidizing the DsbA protein. The sequence is that of Disulfide bond formation protein B from Marinobacter nauticus (strain ATCC 700491 / DSM 11845 / VT8) (Marinobacter aquaeolei).